Reading from the N-terminus, the 459-residue chain is MVEKLWGGRFEASLDKQTEEFGASIKFEQRLAPFDLKGSLAHVKMLGETGIITAEEATTIADGLIKVEEKLMKGQIEFKIENEDIHMNMETYLHDEIGPLAGKLHTARSRNDQVATDMHLYLKSVLSDLLKALRTLRETIVNLSVNHVDTLMPGYTHLQHAQPISFAQHLMAYYQMFTRDFERFEFNVKHTDMNPLGAAALAGTTFPIDRELTTNLLQFEKVYANSMDAVSDRDFILEFLSNSSLLMMHLSRLCEELLLWSSHEFNFVSLSDNYSTGSSIMPQKKNPDMAELIRGKSGRVYGNLISLLTVMKGLPLTYNKDLQEDKEGMFDSADTILTSLSVMDGMLSTMTVNRVNMEKATEQDFSNATELADYLAAKGLPFREAHELVGQLVLKCIKKGIYLQEVSLKDYQALSQLIEEDVYEILKSRTAVSRRNSLGGTGFESIKKQIEQAKKELQK.

This sequence belongs to the lyase 1 family. Argininosuccinate lyase subfamily.

It is found in the cytoplasm. The enzyme catalyses 2-(N(omega)-L-arginino)succinate = fumarate + L-arginine. The protein operates within amino-acid biosynthesis; L-arginine biosynthesis; L-arginine from L-ornithine and carbamoyl phosphate: step 3/3. In Lactococcus lactis subsp. cremoris (strain MG1363), this protein is Argininosuccinate lyase.